The chain runs to 100 residues: Urease subunit gamma (100 aa).

This sequence belongs to the urease gamma subunit family. In terms of assembly, heterotrimer of UreA (gamma), UreB (beta) and UreC (alpha) subunits. Three heterotrimers associate to form the active enzyme.

The protein localises to the cytoplasm. It carries out the reaction urea + 2 H2O + H(+) = hydrogencarbonate + 2 NH4(+). It participates in nitrogen metabolism; urea degradation; CO(2) and NH(3) from urea (urease route): step 1/1. The chain is Urease subunit gamma from Ralstonia pickettii (strain 12J).